A 279-amino-acid polypeptide reads, in one-letter code: Membrane protein insertase YidC (279 aa).

The N-terminal stretch at 1–22 (MKHLKRNMALLSVAALSFILTA) is a signal peptide. A lipid anchor (N-palmitoyl cysteine) is attached at cysteine 23. Cysteine 23 carries the S-diacylglycerol cysteine lipid modification. The next 5 membrane-spanning stretches (helical) occupy residues 35–55 (IWDGVIVYNFSRFIIYLSKLF), 59–79 (YGWGIIVFTIIIRIIILPLMI), 129–149 (MAGCLPLIIQLPVMYALYAAV), 170–190 (PYFILPILAALFTFMSTWLSM), and 210–230 (PLVILITALNFPAAITLYWVV). Positions 253-268 (EEKIQTEKAKRKAIEK) are enriched in basic and acidic residues. Positions 253-279 (EEKIQTEKAKRKAIEKAKRRAMKSKRK) are disordered. The span at 269 to 279 (AKRRAMKSKRK) shows a compositional bias: basic residues.

This sequence belongs to the OXA1/ALB3/YidC family. Type 2 subfamily.

It is found in the cell membrane. Required for the insertion and/or proper folding and/or complex formation of integral membrane proteins into the membrane. Involved in integration of membrane proteins that insert both dependently and independently of the Sec translocase complex, as well as at least some lipoproteins. This chain is Membrane protein insertase YidC, found in Pediococcus pentosaceus (strain ATCC 25745 / CCUG 21536 / LMG 10740 / 183-1w).